The sequence spans 394 residues: SVGFKAGVKDYRLTYYTPEYETKDTDILAAFRVTPQPGVPPEEAGAAVAAESSTGTWTTVWTDGLTSLDRYKGRCYHIEPVAGEENQFIAYVAYPLDLFEEGSVTNMFTSIVGNVFGFKALRALRLEDLRIPPAYSKTFQGPPHGIQVERDKLNKYGRPLLGCTIKPKLGLSAKNYGRAVYECLRGGLDFTKDDENVNSQPFMRWRDRFLFCAEAIYKAQAETGEIKGHYLNATAGTCEEMIKRAVFARELGVPIVMHDYLTGGFTANTSLAHYCRDNGLLLHIHRAMHAVIDRQKNHGIHFRVLAKALRMSGGDHIHSGTVVGKLEGEREITLGFVDLLRDDFIEKDRSRGIYFTQDWVSLPGVLPVASGGIHVWHMPALTEIFGDDSVLQFG.

Lys5 is subject to N6,N6,N6-trimethyllysine. Residues Asn114 and Thr164 each contribute to the substrate site. Residue Lys166 is the Proton acceptor of the active site. Lys168 is a binding site for substrate. Positions 192, 194, and 195 each coordinate Mg(2+). N6-carboxylysine is present on Lys192. The Proton acceptor role is filled by His285. The substrate site is built by Arg286, His318, and Ser370.

Belongs to the RuBisCO large chain family. Type I subfamily. In terms of assembly, heterohexadecamer of 8 large chains and 8 small chains; disulfide-linked. The disulfide link is formed within the large subunit homodimers. Mg(2+) is required as a cofactor. Post-translationally, the disulfide bond which can form in the large chain dimeric partners within the hexadecamer appears to be associated with oxidative stress and protein turnover.

Its subcellular location is the plastid. The protein localises to the chloroplast. The catalysed reaction is 2 (2R)-3-phosphoglycerate + 2 H(+) = D-ribulose 1,5-bisphosphate + CO2 + H2O. It catalyses the reaction D-ribulose 1,5-bisphosphate + O2 = 2-phosphoglycolate + (2R)-3-phosphoglycerate + 2 H(+). In terms of biological role, ruBisCO catalyzes two reactions: the carboxylation of D-ribulose 1,5-bisphosphate, the primary event in carbon dioxide fixation, as well as the oxidative fragmentation of the pentose substrate in the photorespiration process. Both reactions occur simultaneously and in competition at the same active site. In Nelumbo lutea (American lotus), this protein is Ribulose bisphosphate carboxylase large chain (rbcL).